The sequence spans 36 residues: Lambda-hexatoxin-Hv1a (36 aa).

Intrachain disulfides connect Cys3–Cys17, Cys10–Cys22, Cys13–Cys14, and Cys16–Cys33.

Belongs to the neurotoxin 11 (kappa toxin) family. As to expression, expressed by the venom gland.

Its subcellular location is the secreted. In terms of biological role, this excitatory toxin inhibits insect calcium-activated potassium (KCa) channels (Slo-type). The sequence is that of Lambda-hexatoxin-Hv1a from Hadronyche versuta (Blue mountains funnel-web spider).